Reading from the N-terminus, the 842-residue chain is Probable receptor-like protein kinase At5g61350 (842 aa).

Residues 1-27 (MGGDFRHFSSHVSLLLLFLLIVKSSSS) form the signal peptide. Topologically, residues 28–425 (FTPADNYLID…IGGMSSKKLA (398 aa)) are extracellular. Asparagine 81, asparagine 125, asparagine 252, asparagine 294, asparagine 359, and asparagine 365 each carry an N-linked (GlcNAc...) asparagine glycan. The chain crosses the membrane as a helical span at residues 426-446 (IAGIGFVMALTAFLGVVVLLV). At 447–842 (RWQRRPKDWQ…EMQSPSHSIP (396 aa)) the chain is on the cytoplasmic side. In terms of domain architecture, Protein kinase spans 525-803 (FDENAVCGVG…GDVLWNLEYA (279 aa)). Residues 531 to 539 (CGVGGFGKV) and lysine 553 each bind ATP. Aspartate 655 serves as the catalytic Proton acceptor.

It belongs to the protein kinase superfamily. Ser/Thr protein kinase family.

The protein resides in the membrane. The protein is Probable receptor-like protein kinase At5g61350 of Arabidopsis thaliana (Mouse-ear cress).